Reading from the N-terminus, the 521-residue chain is Probable glycogen synthase (521 aa).

It belongs to the glycosyltransferase 1 family. Bacterial/plant glycogen synthase subfamily.

The enzyme catalyses [(1-&gt;4)-alpha-D-glucosyl](n) + ADP-alpha-D-glucose = [(1-&gt;4)-alpha-D-glucosyl](n+1) + ADP + H(+). The protein operates within glycan biosynthesis; glycogen biosynthesis. Its function is as follows. Synthesizes alpha-1,4-glucan chains using ADP-glucose. This Methanocaldococcus jannaschii (strain ATCC 43067 / DSM 2661 / JAL-1 / JCM 10045 / NBRC 100440) (Methanococcus jannaschii) protein is Probable glycogen synthase (glgA).